A 674-amino-acid polypeptide reads, in one-letter code: uncharacterized protein (674 aa).

An N-terminal signal peptide occupies residues 1–24 (MKTLKALKIFIIVYISSVSLESFA). The next 2 helical transmembrane spans lie at 226–246 (IIGAALILYTMFFAFNMALNK) and 254–274 (ITLFIIKFLFVVYFSIGLEPL). Residues 363 to 384 (GNGPGGNNKPIPNFDPDSKKDR) form a disordered region. The next 4 membrane-spanning stretches (helical) occupy residues 409–429 (IIILVAGIAFSVIFLSILLYF), 436–456 (CMITIYVMTYISPIFIPMVLF), 469–489 (VCISCALQPAVVAGFIALLIT), and 562–582 (VVSILAELLCVLVFSVIFYYF). The disordered stretch occupies residues 624-674 (SSVHAQGKSPVEDKPDIGSKRKDGVQQGEDSENSSGGELADLASGSGGGKL). Residues 633 to 647 (PVEDKPDIGSKRKDG) show a composition bias toward basic and acidic residues.

Belongs to the TrbL/VirB6 family.

The protein resides in the cell membrane. This is an uncharacterized protein from Rickettsia typhi (strain ATCC VR-144 / Wilmington).